The primary structure comprises 988 residues: Chitin synthase 1 (988 aa).

Positions 29–75 (QHHWPPSSGSSLGRAPSIPLSSSNPRSPIRPSTPSRVSTDWTRPPAP) are disordered. The segment covering 44-66 (PSIPLSSSNPRSPIRPSTPSRVS) has biased composition (low complexity). Transmembrane regions (helical) follow at residues 577-596 (WLNGAFFAAVYALVHFKQIW), 616-636 (FISLLFTFFSLANFYLTFYFV), 656-676 (IFVILRYVCVLLICLQFILSL), 732-752 (IFTNLIVSSVSTIGLFFLMSF), 764-784 (SAQYFALLPSYICTLQVYAFC), 864-884 (YVVASYMVCNAILAMAVSEAY), and 911-931 (AIGSSAFGVINIVSAIAEGRI). Residues 950 to 988 (AGLGSGFSESGKTGITSGSGMSGMSLSDVTSKISEKLAG) are disordered. Residues 957–976 (SESGKTGITSGSGMSGMSLS) show a composition bias toward low complexity.

It belongs to the chitin synthase family. Class II subfamily.

It localises to the cell membrane. It catalyses the reaction [(1-&gt;4)-N-acetyl-beta-D-glucosaminyl](n) + UDP-N-acetyl-alpha-D-glucosamine = [(1-&gt;4)-N-acetyl-beta-D-glucosaminyl](n+1) + UDP + H(+). Functionally, polymerizes chitin, a structural polymer of the cell wall and septum, by transferring the sugar moiety of UDP-GlcNAc to the non-reducing end of the growing chitin polymer. CHS1 mainly responsible for normal yeast cell reproductive growth. This is Chitin synthase 1 from Exophiala dermatitidis (Black yeast-like fungus).